A 433-amino-acid polypeptide reads, in one-letter code: Pyroglutamylated RF-amide peptide receptor (433 aa).

The Extracellular segment spans residues 1 to 46; that stretch reads MQALNITAEQFSRLLSAHNLTREQFIHRYGLRPLVYTPELPARAKL. N-linked (GlcNAc...) asparagine glycans are attached at residues N5 and N19. The helical transmembrane segment at 47-67 threads the bilayer; that stretch reads AFALAGALIFALALFGNSLVI. The Cytoplasmic segment spans residues 68–81; that stretch reads YVVTRSKAMRTVTN. A helical membrane pass occupies residues 82-102; sequence IFICSLALSDLLIAFFCIPVT. The Extracellular portion of the chain corresponds to 103-120; the sequence is MLQNISDKWLGGAFICKM. A helical membrane pass occupies residues 121–141; sequence VPFVQSTAVVTEILTMTCIAV. Residues 142–162 are Cytoplasmic-facing; sequence ERHQGLIHPFKMKWQYTTRRA. Residues 163–183 form a helical membrane-spanning segment; sequence FTILGVVWLAAIIVGSPMWHV. Topologically, residues 184–212 are extracellular; sequence QRLEIKYDFLYEKEHVCCLEEWASPMHQR. Residues 213 to 233 traverse the membrane as a helical segment; that stretch reads IYTTFILVILFLLPLVVMLVL. Over 234 to 271 the chain is Cytoplasmic; the sequence is YSKIGYELWIKKRVGDSSALQTIHGKEMSKIARKKKRA. Residues 272–292 form a helical membrane-spanning segment; that stretch reads VVMMVTVVALFAACWAPFHVV. Residues 293 to 313 lie on the Extracellular side of the membrane; sequence HMMVEYSNFEKEYDDVTIKMV. The helical transmembrane segment at 314–334 threads the bilayer; the sequence is FAVAQTIGFFNSICNPFVYAF. Residues 335–433 are Cytoplasmic-facing; it reads MNENFKKNFL…NSTFGSGHEL (99 aa).

The protein belongs to the G-protein coupled receptor 1 family. In terms of tissue distribution, expressed widely in the brain with high levels in the cortex and hypothalamus, and moderate levels in the brain stem, caudate nucleus, midbrain hippocampus, thalamus, trigeminal ganglia and spinal cord. Particularly strong expression detected in the mitral cell layer of the olfactory bulb, accessory olfactory bulb, island of Calleja and nucleus of the solitary tract. In peripheral tissues, expressed at moderate levels in the eye, liver, kidney, pituitary gland, testis and thymus.

Its subcellular location is the cell membrane. Its function is as follows. Receptor for the orexigenic neuropeptide QRFP. The activity of this receptor is mediated by G proteins that modulate adenylate cyclase activity and intracellular calcium levels. The polypeptide is Pyroglutamylated RF-amide peptide receptor (Qrfpr) (Mus musculus (Mouse)).